A 473-amino-acid chain; its full sequence is Vasculin-like protein 1 (473 aa).

The span at 14–25 shows a compositional bias: polar residues; that stretch reads STPQSSKSSTAT. Residues 14–55 are disordered; it reads STPQSSKSSTATFDKHGEHLSRGEGRFGISRRRHNSSDGFFN. The segment covering 26–38 has biased composition (basic and acidic residues); the sequence is FDKHGEHLSRGEG. Residues Ser49 and Ser76 each carry the phosphoserine modification. 2 disordered regions span residues 88-127 and 155-189; these read GTTG…RKGC and DFPS…AKQP. Over residues 103–112 the composition is skewed to polar residues; that stretch reads SQRSGGSSTG. Residues 113 to 125 are compositionally biased toward basic residues; sequence NHRHWNGSFHSRK. Ser199 carries the post-translational modification Phosphoserine. Disordered regions lie at residues 235 to 267 and 281 to 316; these read LVPK…SRES and LAAG…RRTT. Residue Ser289 is modified to Phosphoserine. Residues 292–309 are compositionally biased toward low complexity; that stretch reads ESPSSTTPPIEISSSRLT. Thr298 is modified (phosphothreonine). Ser381 bears the Phosphoserine mark. The tract at residues 453–473 is disordered; it reads ECEDSDSETSSSQTSDDDAWK.

The protein belongs to the vasculin family.

It is found in the nucleus. Its function is as follows. Possible transcription factor. This is Vasculin-like protein 1 (Gpbp1l1) from Mus musculus (Mouse).